The following is a 630-amino-acid chain: uncharacterized protein (630 aa).

2 helical membrane passes run 8–28 (LFNM…ASAV) and 258–278 (VDNS…PLVI). The interval 399-426 (EETSKPTEQPSPADSTSTPAAPEKGAAS) is disordered. Polar residues predominate over residues 404 to 417 (PTEQPSPADSTSTP).

The protein belongs to the peptidase S1C family.

It is found in the cell membrane. This is an uncharacterized protein from Sinorhizobium fredii (strain NBRC 101917 / NGR234).